Here is a 109-residue protein sequence, read N- to C-terminus: Large ribosomal subunit protein P1C (109 aa).

Residues 68–83 (ASAPTAAGAGAAAPAE) show a composition bias toward low complexity. Residues 68-109 (ASAPTAAGAGAAAPAEAAEEEKKEEAKEEEESDEDMGFGLFD) form a disordered region. The segment covering 94–103 (KEEEESDEDM) has biased composition (acidic residues). S99 carries the phosphoserine modification.

This sequence belongs to the eukaryotic ribosomal protein P1/P2 family. In terms of assembly, component of the large ribosomal subunit (LSU). Mature yeast ribosomes consist of a small (40S) and a large (60S) subunit. The 40S small subunit contains 1 molecule of ribosomal RNA (18S rRNA) and at least 33 different proteins. The large 60S subunit contains 3 rRNA molecules (25S, 5.8S and 5S rRNA) and at least 46 different proteins. The acidic ribosomal P-proteins form the stalk structure of the 60S subunit. They are organized as a pentameric complex in which uL10/P0 interacts with 2 heterodimers of P1 and P2 proteins.

It localises to the cytoplasm. Its function is as follows. Component of the ribosome, a large ribonucleoprotein complex responsible for the synthesis of proteins in the cell. The small ribosomal subunit (SSU) binds messenger RNAs (mRNAs) and translates the encoded message by selecting cognate aminoacyl-transfer RNA (tRNA) molecules. The large subunit (LSU) contains the ribosomal catalytic site termed the peptidyl transferase center (PTC), which catalyzes the formation of peptide bonds, thereby polymerizing the amino acids delivered by tRNAs into a polypeptide chain. The nascent polypeptides leave the ribosome through a tunnel in the LSU and interact with protein factors that function in enzymatic processing, targeting, and the membrane insertion of nascent chains at the exit of the ribosomal tunnel. The sequence is that of Large ribosomal subunit protein P1C (rpp103) from Schizosaccharomyces pombe (strain 972 / ATCC 24843) (Fission yeast).